Here is a 452-residue protein sequence, read N- to C-terminus: Peptidase M20 domain-containing protein SMAC_03666.2 (452 aa).

An N-terminal signal peptide occupies residues 1-28; that stretch reads MKATSNLLLLWGTSLLSPSSAFVIDNHH. A glycan (N-linked (GlcNAc...) asparagine) is linked at Asn140. A Zn(2+)-binding site is contributed by Asp186. Glu220 (proton acceptor) is an active-site residue. Glu221 serves as a coordination point for Zn(2+). Asn315 is a glycosylation site (N-linked (GlcNAc...) asparagine).

The protein belongs to the peptidase M20A family. Zn(2+) serves as cofactor.

It localises to the secreted. This is Peptidase M20 domain-containing protein SMAC_03666.2 from Sordaria macrospora (strain ATCC MYA-333 / DSM 997 / K(L3346) / K-hell).